The sequence spans 595 residues: Cardiolipin synthase (CMP-forming) / mitochondrial hydrolase fusion protein (595 aa).

The N-terminal 24 residues, 1–24 (MLHTINYRSWHLAARQLGRSTFRK), are a transit peptide targeting the mitochondrion. The next 2 helical transmembrane spans lie at 538–560 (ALQLLLLGLLITEPILPFDASFA) and 564–586 (LFYIVGCTTIASGASYCISRNTF).

In the N-terminal section; belongs to the HAD-like hydrolase superfamily. This sequence in the C-terminal section; belongs to the CDP-alcohol phosphatidyltransferase class-I family. Mg(2+) is required as a cofactor. Proteolytically cleaved, presumably during its import into the mitochondrion by mitochondrial processing peptidase.

The protein resides in the mitochondrion. The protein localises to the mitochondrion inner membrane. It carries out the reaction a CDP-1,2-diacyl-sn-glycerol + a 1,2-diacyl-sn-glycero-3-phospho-(1'-sn-glycerol) = a cardiolipin + CMP + H(+). In terms of biological role, catalyzes the synthesis of cardiolipin (CL) (diphosphatidylglycerol) by specifically transferring a phosphatidyl group from CDP-diacylglycerol to phosphatidylglycerol (PG). CL is a key phospholipid in mitochondrial membranes and plays important roles in maintaining the functional integrity and dynamics of mitochondria under both optimal and stress conditions. Its function is as follows. Activity is dispensable for viability. This Schizosaccharomyces pombe (strain 972 / ATCC 24843) (Fission yeast) protein is Cardiolipin synthase (CMP-forming) / mitochondrial hydrolase fusion protein.